Consider the following 957-residue polypeptide: Glycine dehydrogenase (decarboxylating) (957 aa).

K708 bears the N6-(pyridoxal phosphate)lysine mark.

The protein belongs to the GcvP family. The glycine cleavage system is composed of four proteins: P, T, L and H. Requires pyridoxal 5'-phosphate as cofactor.

The catalysed reaction is N(6)-[(R)-lipoyl]-L-lysyl-[glycine-cleavage complex H protein] + glycine + H(+) = N(6)-[(R)-S(8)-aminomethyldihydrolipoyl]-L-lysyl-[glycine-cleavage complex H protein] + CO2. The glycine cleavage system catalyzes the degradation of glycine. The P protein binds the alpha-amino group of glycine through its pyridoxal phosphate cofactor; CO(2) is released and the remaining methylamine moiety is then transferred to the lipoamide cofactor of the H protein. This Salmonella newport (strain SL254) protein is Glycine dehydrogenase (decarboxylating).